A 207-amino-acid polypeptide reads, in one-letter code: ATP synthase subunit delta (207 aa).

The protein belongs to the ATPase delta chain family. As to quaternary structure, F-type ATPases have 2 components, F(1) - the catalytic core - and F(0) - the membrane proton channel. F(1) has five subunits: alpha(3), beta(3), gamma(1), delta(1), epsilon(1). F(0) has three main subunits: a(1), b(2) and c(10-14). The alpha and beta chains form an alternating ring which encloses part of the gamma chain. F(1) is attached to F(0) by a central stalk formed by the gamma and epsilon chains, while a peripheral stalk is formed by the delta and b chains.

It is found in the cell inner membrane. Functionally, f(1)F(0) ATP synthase produces ATP from ADP in the presence of a proton or sodium gradient. F-type ATPases consist of two structural domains, F(1) containing the extramembraneous catalytic core and F(0) containing the membrane proton channel, linked together by a central stalk and a peripheral stalk. During catalysis, ATP synthesis in the catalytic domain of F(1) is coupled via a rotary mechanism of the central stalk subunits to proton translocation. This protein is part of the stalk that links CF(0) to CF(1). It either transmits conformational changes from CF(0) to CF(1) or is implicated in proton conduction. The protein is ATP synthase subunit delta of Psychrobacter cryohalolentis (strain ATCC BAA-1226 / DSM 17306 / VKM B-2378 / K5).